Reading from the N-terminus, the 116-residue chain is Non-specific lipid-transfer protein 8 (116 aa).

The signal sequence occupies residues Met1–Ser24. Intrachain disulfides connect Cys28–Cys76, Cys38–Cys53, Cys54–Cys98, and Cys74–Cys112.

Belongs to the plant LTP family.

Its function is as follows. Plant non-specific lipid-transfer proteins transfer phospholipids as well as galactolipids across membranes. May play a role in wax or cutin deposition in the cell walls of expanding epidermal cells and certain secretory tissues. The chain is Non-specific lipid-transfer protein 8 (LTP8) from Arabidopsis thaliana (Mouse-ear cress).